The chain runs to 343 residues: Olfactory receptor 6K6 (343 aa).

Residues 1–53 lie on the Extracellular side of the membrane; the sequence is MKQYSVGNQHSNYRSLLFPFLCSQMTQLTASGNQTMVTEFLFSMFPHAHRGGL. Residue N33 is glycosylated (N-linked (GlcNAc...) asparagine). A helical membrane pass occupies residues 54-74; it reads LFFIPLLLIYGFILTGNLIMF. Over 75–82 the chain is Cytoplasmic; it reads IVIQVGMA. A helical membrane pass occupies residues 83-103; it reads LHTPLYFFISVLSFLEICYTT. Residues 104–127 lie on the Extracellular side of the membrane; it reads TTIPKMLSCLISEQKSISVAGCLL. A disulfide bridge links C125 with C217. A helical membrane pass occupies residues 128-148; the sequence is QMYFFHSLGITESCVLTAMAI. Residues 149–167 are Cytoplasmic-facing; it reads DRYIAICNPLRYPTIMIPK. Residues 168–188 traverse the membrane as a helical segment; the sequence is LCIQLTVGSCFCGFLLVLPEI. The Extracellular portion of the chain corresponds to 189-224; sequence AWISTLPFCGSNQIHQIFCDFTPVLSLACTDTFLVV. A helical transmembrane segment spans residues 225–244; that stretch reads IVDAIHAAEIVASFLVIALS. Residues 245–264 lie on the Cytoplasmic side of the membrane; it reads YIRIIIVILGMHSAEGHHKA. The helical transmembrane segment at 265–285 threads the bilayer; sequence FSTCAAHLAVFLLFFGSVAVM. Over 286–298 the chain is Extracellular; sequence YLRFSATYSVFWD. The chain crosses the membrane as a helical span at residues 299–319; sequence TAIAVTFVILAPFFNPIIYSL. The Cytoplasmic segment spans residues 320 to 343; the sequence is KNKDMKEAIGRLFHYQKRAGWAGK.

The protein belongs to the G-protein coupled receptor 1 family.

Its subcellular location is the cell membrane. Its function is as follows. Odorant receptor. This Homo sapiens (Human) protein is Olfactory receptor 6K6 (OR6K6).